The primary structure comprises 150 residues: Ribosome maturation factor RimP (150 aa).

This sequence belongs to the RimP family.

The protein resides in the cytoplasm. Required for maturation of 30S ribosomal subunits. The sequence is that of Ribosome maturation factor RimP from Thermotoga sp. (strain RQ2).